The chain runs to 219 residues: Ras-related protein RABA5d (219 aa).

At serine 2 the chain carries N-acetylserine. Residue 19 to 26 (GDSAVGKS) coordinates GTP. The Effector region motif lies at 41–49 (SKATIGVEF). GTP-binding positions include 67 to 71 (DTAGQ), 125 to 128 (NKCD), and 155 to 156 (SA). S-geranylgeranyl cysteine attachment occurs at residues cysteine 215 and cysteine 216.

This sequence belongs to the small GTPase superfamily. Rab family.

The protein resides in the cell membrane. In terms of biological role, intracellular vesicle trafficking and protein transport. The chain is Ras-related protein RABA5d (RABA5D) from Arabidopsis thaliana (Mouse-ear cress).